The following is a 102-amino-acid chain: Small ribosomal subunit protein uS10 (102 aa).

This sequence belongs to the universal ribosomal protein uS10 family. Part of the 30S ribosomal subunit.

In terms of biological role, involved in the binding of tRNA to the ribosomes. The sequence is that of Small ribosomal subunit protein uS10 from Nitrosospira multiformis (strain ATCC 25196 / NCIMB 11849 / C 71).